Here is a 172-residue protein sequence, read N- to C-terminus: Large ribosomal subunit protein uL10 (172 aa).

It belongs to the universal ribosomal protein uL10 family. In terms of assembly, part of the ribosomal stalk of the 50S ribosomal subunit. The N-terminus interacts with L11 and the large rRNA to form the base of the stalk. The C-terminus forms an elongated spine to which L12 dimers bind in a sequential fashion forming a multimeric L10(L12)X complex.

Its function is as follows. Forms part of the ribosomal stalk, playing a central role in the interaction of the ribosome with GTP-bound translation factors. The polypeptide is Large ribosomal subunit protein uL10 (Brucella suis biovar 1 (strain 1330)).